Here is a 429-residue protein sequence, read N- to C-terminus: D-amino acid dehydrogenase (429 aa).

FAD is bound at residue 3 to 17; that stretch reads VLILGSGVIGVTSAW.

It belongs to the DadA oxidoreductase family. FAD serves as cofactor.

It catalyses the reaction a D-alpha-amino acid + A + H2O = a 2-oxocarboxylate + AH2 + NH4(+). In terms of biological role, oxidative deamination of D-amino acids. In Xanthomonas axonopodis pv. citri (strain 306), this protein is D-amino acid dehydrogenase.